Consider the following 313-residue polypeptide: Tyrosine--tRNA ligase (313 aa).

Tyrosine 32 contributes to the L-tyrosine binding site. The 'HIGH' region signature appears at 37–45; the sequence is PSGEIHLGH. Tyrosine 152, glutamine 156, aspartate 159, and glutamine 174 together coordinate L-tyrosine. Positions 208–212 match the 'KMSKS' region motif; sequence KMSSS. Serine 211 contacts ATP.

This sequence belongs to the class-I aminoacyl-tRNA synthetase family. TyrS type 3 subfamily. In terms of assembly, homodimer.

Its subcellular location is the cytoplasm. The enzyme catalyses tRNA(Tyr) + L-tyrosine + ATP = L-tyrosyl-tRNA(Tyr) + AMP + diphosphate + H(+). In terms of biological role, catalyzes the attachment of tyrosine to tRNA(Tyr) in a two-step reaction: tyrosine is first activated by ATP to form Tyr-AMP and then transferred to the acceptor end of tRNA(Tyr). This Methanospirillum hungatei JF-1 (strain ATCC 27890 / DSM 864 / NBRC 100397 / JF-1) protein is Tyrosine--tRNA ligase.